We begin with the raw amino-acid sequence, 72 residues long: NAD(P)H-quinone oxidoreductase subunit O (72 aa).

Belongs to the complex I NdhO subunit family. As to quaternary structure, NDH-1 can be composed of about 15 different subunits; different subcomplexes with different compositions have been identified which probably have different functions.

Its subcellular location is the cellular thylakoid membrane. The enzyme catalyses a plastoquinone + NADH + (n+1) H(+)(in) = a plastoquinol + NAD(+) + n H(+)(out). It catalyses the reaction a plastoquinone + NADPH + (n+1) H(+)(in) = a plastoquinol + NADP(+) + n H(+)(out). NDH-1 shuttles electrons from an unknown electron donor, via FMN and iron-sulfur (Fe-S) centers, to quinones in the respiratory and/or the photosynthetic chain. The immediate electron acceptor for the enzyme in this species is believed to be plastoquinone. Couples the redox reaction to proton translocation, and thus conserves the redox energy in a proton gradient. Cyanobacterial NDH-1 also plays a role in inorganic carbon-concentration. The protein is NAD(P)H-quinone oxidoreductase subunit O of Synechococcus elongatus (strain ATCC 33912 / PCC 7942 / FACHB-805) (Anacystis nidulans R2).